The sequence spans 519 residues: Membrane-bound lytic murein transglycosylase F (519 aa).

A signal peptide spans 1-32; it reads MKKLKLNYLLIGVVTLLLAVALWPAIPWSGKA. Residues 33–269 are non-LT domain; the sequence is DNRIAAIQAR…RLEEKYLGHG (237 aa). The tract at residues 270 to 519 is LT domain; the sequence is NDFDYVDTRS…PNTLSPVSPR (250 aa). Glutamate 314 is an active-site residue. The tract at residues 495–519 is disordered; the sequence is PFSQAGAGGKTHSALPNTLSPVSPR. Residues 508 to 519 show a composition bias toward polar residues; that stretch reads ALPNTLSPVSPR.

It in the N-terminal section; belongs to the bacterial solute-binding protein 3 family. In the C-terminal section; belongs to the transglycosylase Slt family.

It is found in the cell outer membrane. The enzyme catalyses Exolytic cleavage of the (1-&gt;4)-beta-glycosidic linkage between N-acetylmuramic acid (MurNAc) and N-acetylglucosamine (GlcNAc) residues in peptidoglycan, from either the reducing or the non-reducing ends of the peptidoglycan chains, with concomitant formation of a 1,6-anhydrobond in the MurNAc residue.. In terms of biological role, murein-degrading enzyme that degrades murein glycan strands and insoluble, high-molecular weight murein sacculi, with the concomitant formation of a 1,6-anhydromuramoyl product. Lytic transglycosylases (LTs) play an integral role in the metabolism of the peptidoglycan (PG) sacculus. Their lytic action creates space within the PG sacculus to allow for its expansion as well as for the insertion of various structures such as secretion systems and flagella. In Cronobacter sakazakii (strain ATCC BAA-894) (Enterobacter sakazakii), this protein is Membrane-bound lytic murein transglycosylase F.